The following is a 450-amino-acid chain: ATP-dependent protease ATPase subunit HslU (450 aa).

Residues V29, 71–76 (GVGKTE), D261, E328, and R400 contribute to the ATP site.

Belongs to the ClpX chaperone family. HslU subfamily. In terms of assembly, a double ring-shaped homohexamer of HslV is capped on each side by a ring-shaped HslU homohexamer. The assembly of the HslU/HslV complex is dependent on binding of ATP.

The protein resides in the cytoplasm. In terms of biological role, ATPase subunit of a proteasome-like degradation complex; this subunit has chaperone activity. The binding of ATP and its subsequent hydrolysis by HslU are essential for unfolding of protein substrates subsequently hydrolyzed by HslV. HslU recognizes the N-terminal part of its protein substrates and unfolds these before they are guided to HslV for hydrolysis. The protein is ATP-dependent protease ATPase subunit HslU of Rickettsia africae (strain ESF-5).